A 142-amino-acid polypeptide reads, in one-letter code: Large ribosomal subunit protein uL11 (142 aa).

This sequence belongs to the universal ribosomal protein uL11 family. As to quaternary structure, part of the ribosomal stalk of the 50S ribosomal subunit. Interacts with L10 and the large rRNA to form the base of the stalk. L10 forms an elongated spine to which L12 dimers bind in a sequential fashion forming a multimeric L10(L12)X complex. In terms of processing, one or more lysine residues are methylated.

In terms of biological role, forms part of the ribosomal stalk which helps the ribosome interact with GTP-bound translation factors. This chain is Large ribosomal subunit protein uL11, found in Shewanella baltica (strain OS223).